The following is a 637-amino-acid chain: Threonine--tRNA ligase (637 aa).

One can recognise a TGS domain in the interval 1 to 61 (MPVITLPNGS…EQDAALSIVT (61 aa)). The segment at 242–533 (DHRKLGKKFD…LIENYEGAFP (292 aa)) is catalytic. The Zn(2+) site is built by cysteine 333, histidine 384, and histidine 510.

The protein belongs to the class-II aminoacyl-tRNA synthetase family. Homodimer. Requires Zn(2+) as cofactor.

Its subcellular location is the cytoplasm. The enzyme catalyses tRNA(Thr) + L-threonine + ATP = L-threonyl-tRNA(Thr) + AMP + diphosphate + H(+). In terms of biological role, catalyzes the attachment of threonine to tRNA(Thr) in a two-step reaction: L-threonine is first activated by ATP to form Thr-AMP and then transferred to the acceptor end of tRNA(Thr). Also edits incorrectly charged L-seryl-tRNA(Thr). In Teredinibacter turnerae (strain ATCC 39867 / T7901), this protein is Threonine--tRNA ligase.